The chain runs to 197 residues: FMN-dependent NADH:quinone oxidoreductase (197 aa).

FMN is bound by residues serine 10, 16–18, 93–96, and 137–140; these read SQS, MYNF, and TRGG.

The protein belongs to the azoreductase type 1 family. In terms of assembly, homodimer. The cofactor is FMN.

The enzyme catalyses 2 a quinone + NADH + H(+) = 2 a 1,4-benzosemiquinone + NAD(+). It catalyses the reaction N,N-dimethyl-1,4-phenylenediamine + anthranilate + 2 NAD(+) = 2-(4-dimethylaminophenyl)diazenylbenzoate + 2 NADH + 2 H(+). Quinone reductase that provides resistance to thiol-specific stress caused by electrophilic quinones. Functionally, also exhibits azoreductase activity. Catalyzes the reductive cleavage of the azo bond in aromatic azo compounds to the corresponding amines. In Shewanella denitrificans (strain OS217 / ATCC BAA-1090 / DSM 15013), this protein is FMN-dependent NADH:quinone oxidoreductase.